We begin with the raw amino-acid sequence, 234 residues long: Thrombin-like enzyme acutin (234 aa).

Residue Met-1 is a propeptide. Residues 2–225 form the Peptidase S1 domain; that stretch reads VIGGDECDIN…YTDWIQRNIA (224 aa). Cystine bridges form between Cys-8–Cys-140, Cys-27–Cys-43, Cys-75–Cys-232, Cys-119–Cys-186, Cys-151–Cys-165, and Cys-176–Cys-201. An N-linked (GlcNAc...) asparagine glycan is attached at Asn-21. Residues His-42 and Asp-87 each act as charge relay system in the active site. Ser-180 functions as the Charge relay system in the catalytic mechanism.

The protein belongs to the peptidase S1 family. Snake venom subfamily. As to quaternary structure, monomer. Expressed by the venom gland.

The protein localises to the secreted. Thrombin-like snake venom serine protease. Has arginyl esterase and fibrinogen clotting activities. This Deinagkistrodon acutus (Hundred-pace snake) protein is Thrombin-like enzyme acutin.